We begin with the raw amino-acid sequence, 346 residues long: Peroxidase 37 (346 aa).

An N-terminal signal peptide occupies residues Met1–Ala22. Position 23 is a pyrrolidone carboxylic acid (Gln23). 4 disulfides stabilise this stretch: Cys33/Cys113, Cys66/Cys71, Cys119/Cys323, and Cys199/Cys231. His64 functions as the Proton acceptor in the catalytic mechanism. Ca(2+)-binding residues include Asp65, Val68, Gly70, Asp72, and Ser74. Asn79 carries N-linked (GlcNAc...) asparagine glycosylation. Residue Pro161 coordinates substrate. Residue His192 coordinates heme b. Thr193 contacts Ca(2+). 2 N-linked (GlcNAc...) asparagine glycosylation sites follow: Asn208 and Asn236. Ca(2+) contacts are provided by Asp244, Thr247, and Asp252.

This sequence belongs to the peroxidase family. Classical plant (class III) peroxidase subfamily. Heme b is required as a cofactor. Requires Ca(2+) as cofactor.

It is found in the secreted. The protein resides in the vacuole. It carries out the reaction 2 a phenolic donor + H2O2 = 2 a phenolic radical donor + 2 H2O. Removal of H(2)O(2), oxidation of toxic reductants, biosynthesis and degradation of lignin, suberization, auxin catabolism, response to environmental stresses such as wounding, pathogen attack and oxidative stress. These functions might be dependent on each isozyme/isoform in each plant tissue. This chain is Peroxidase 37 (PER37), found in Arabidopsis thaliana (Mouse-ear cress).